A 75-amino-acid polypeptide reads, in one-letter code: UPF0352 protein YejL (75 aa).

This sequence belongs to the UPF0352 family.

In Escherichia coli O127:H6 (strain E2348/69 / EPEC), this protein is UPF0352 protein YejL.